We begin with the raw amino-acid sequence, 1027 residues long: Presequence protease, mitochondrial (1027 aa).

Residues 1–22 constitute a mitochondrion transit peptide; that stretch reads MIRQCRAGLRLCRALYQTSYRW. Zn(2+) is bound at residue histidine 98. The Proton acceptor role is filled by glutamate 101. Histidine 102 and glutamate 199 together coordinate Zn(2+). A disulfide bridge connects residues cysteine 113 and cysteine 550. The interval 800 to 829 is disordered; that stretch reads KKERKSIRPHVVEKSSSPSSSGSEISRRAT. Low complexity predominate over residues 814–823; the sequence is SSSPSSSGSE.

Belongs to the peptidase M16 family. PreP subfamily. As to quaternary structure, monomer and homodimer; homodimerization is induced by binding of the substrate. Zn(2+) serves as cofactor. A disulfide bond locks the enzyme in the closed conformation preventing substrate entry into the catalytic chamber.

Its subcellular location is the mitochondrion matrix. Its activity is regulated as follows. Mainly exists in a closed and catalytically competent conformation but a closed-to-open switch allows substrate entry into the catalytic chamber. Substrate binding induces closure and dimerization. A disulfide bond may lock the enzyme in a closed conformation preventing substrate entry into the catalytic chamber, participating in redox regulation of the enzyme. Inhibited by metal-chelating agents. Inhibited by nickel and zinc excess, and slightly activated by manganese. Metalloendopeptidase of the mitochondrial matrix that functions in peptide cleavage and degradation rather than in protein processing. Has an ATP-independent activity. Specifically cleaves peptides in the range of 5 to 65 residues. Shows a preference for cleavage after small polar residues and before basic residues, but without any positional preference. Degrades the transit peptides of mitochondrial proteins after their cleavage. Also degrades other unstructured peptides. The chain is Presequence protease, mitochondrial (pitrm1) from Xenopus tropicalis (Western clawed frog).